The sequence spans 124 residues: uncharacterized protein (124 aa).

In terms of biological role, this protein may be involved in virus assembly. This is an uncharacterized protein from Sulfolobus spindle-shape virus 1 (SSV1).